The following is a 413-amino-acid chain: MSSAKEQSSVTAALQPEQWTTSSNEALKLFVTNPEAALNFQPTFTYPIFGDAETIYGYKDLDIFLCFDHYTFKPFLNIKYSAKLTDDPEIIDIKKTIDEFLPKSTIFKDEVKWVDSIKEEKDNGYKIPGKLIDSFSENDKEYDIYKIDLKSDNGYELHQRLQILVLLFIEAGSFIDAKDELWNLYVLYEKDNKSTSNNEPSIVGFTTAYNYWKYPGAKKFDSTEQESRIKISQFIILPIYQGQGLGQLFYSHLFDKWLAQDDIIEVVVEDPNESFDDLRDRADLKRLNTSEQFDFKAVTPKVDKEWVEKTRRALKLEKRQFARLLEIILLYKLKHGYPGITKRDVRLFIKKRLYDKNKEGLATLDDNTKKDKLQTAYQALEDDYYRILGDLKLNIKRENDEEETDTVSKKQKV.

2 interaction with histone H4 N-terminus regions span residues 51–53 (DAE) and 209–211 (YNY). Acetyl-CoA-binding positions include 234–236 (FII) and 241–247 (QGQGLGQ). The active-site Proton donor/acceptor is glutamate 269.

The protein belongs to the HAT1 family. Component of the HAT-B complex composed of at least HAT1 and HAT2. The HAT-B complex binds to histone H4 tail.

The protein localises to the cytoplasm. It is found in the nucleus. The catalysed reaction is L-lysyl-[protein] + acetyl-CoA = N(6)-acetyl-L-lysyl-[protein] + CoA + H(+). Its function is as follows. Catalytic component of the histone acetylase B (HAT-B) complex. Acetylates 'Lys-14' of histone H4 which is required for telomeric silencing. Has intrinsic substrate specificity that modifies lysine in recognition sequence GXGKXG. Involved in DNA double-strand break repair. This Candida albicans (strain SC5314 / ATCC MYA-2876) (Yeast) protein is Histone acetyltransferase type B catalytic subunit (HAT1).